We begin with the raw amino-acid sequence, 588 residues long: uncharacterized protein (588 aa).

Residues 1–19 (MRSTAYLTALLSFLGATHA) form the signal peptide. N-linked (GlcNAc...) asparagine glycosylation is found at Asn45 and Asn104. Residues 118–303 (GQGRIPLYSA…TSVTLRTFKD (186 aa)) enclose the FAD-binding PCMH-type domain. Pros-8alpha-FAD histidine is present on His156. N-linked (GlcNAc...) asparagine glycans are attached at residues Asn179, Asn312, Asn320, Asn351, Asn370, and Asn446.

It belongs to the oxygen-dependent FAD-linked oxidoreductase family. It depends on FAD as a cofactor.

The protein localises to the secreted. This is an uncharacterized protein from Arthroderma benhamiae (strain ATCC MYA-4681 / CBS 112371) (Trichophyton mentagrophytes).